The primary structure comprises 252 residues: Small ribosomal subunit protein eS1B (252 aa).

Position 2 is an N-acetylalanine; partial (Ala-2). Ser-251 carries the phosphoserine modification.

The protein belongs to the eukaryotic ribosomal protein eS1 family. In terms of assembly, component of the small ribosomal subunit (SSU). Mature yeast ribosomes consist of a small (40S) and a large (60S) subunit. The 40S small subunit contains 1 molecule of ribosomal RNA (18S rRNA) and at least 33 different proteins. The large 60S subunit contains 3 rRNA molecules (25S, 5.8S and 5S rRNA) and at least 46 different proteins. eS1 interacts directly with uS11 and eS26, which form part of the mRNA exit tunnel.

The protein localises to the cytoplasm. Its function is as follows. Component of the ribosome, a large ribonucleoprotein complex responsible for the synthesis of proteins in the cell. The small ribosomal subunit (SSU) binds messenger RNAs (mRNAs) and translates the encoded message by selecting cognate aminoacyl-transfer RNA (tRNA) molecules. The large subunit (LSU) contains the ribosomal catalytic site termed the peptidyl transferase center (PTC), which catalyzes the formation of peptide bonds, thereby polymerizing the amino acids delivered by tRNAs into a polypeptide chain. The nascent polypeptides leave the ribosome through a tunnel in the LSU and interact with protein factors that function in enzymatic processing, targeting, and the membrane insertion of nascent chains at the exit of the ribosomal tunnel. This is Small ribosomal subunit protein eS1B (rps102) from Schizosaccharomyces pombe (strain 972 / ATCC 24843) (Fission yeast).